Reading from the N-terminus, the 105-residue chain is 5-hydroxymethyl-dUMP N-hydrolase (105 aa).

5-hydroxymethyl-dUMP contacts are provided by G6, I8, S42, G44, E48, and S72.

Belongs to the 2'-deoxynucleoside 5'-phosphate N-hydrolase 1 family. In terms of assembly, monomer and homodimer.

It localises to the cytoplasm. The protein localises to the nucleus. It catalyses the reaction 5-hydroxymethyl-dUMP + H2O = 5-hydroxymethyluracil + 2-deoxy-D-ribose 5-phosphate. In terms of biological role, part of a nucleotide salvage pathway that eliminates epigenetically modified 5-hydroxymethyl-dCMP (hmdCMP) in a two-step process entailing deamination to cytotoxic 5-hydroxymethyl-dUMP (hmdUMP), followed by its hydrolysis into 5-hydroxymethyluracil (hmU) and 2-deoxy-D-ribose 5-phosphate (deoxyribosephosphate). Catalyzes the second step in that pathway, the hydrolysis of the N-glycosidic bond in hmdUMP, degrading this cytotoxic nucleotide to avoid its genomic integration. This is 5-hydroxymethyl-dUMP N-hydrolase from Branchiostoma floridae (Florida lancelet).